Reading from the N-terminus, the 181-residue chain is MASDGRVERIASSIRAIPNFPKPGILFQDITTLLLDPQAFRDTTDLFVERYKDKDITVVAGVEARGFIFGPPIALAIGAKFVPIRKPKKLPGEVISEEYSLEYGTDKIEMHVGAVQPNDRVLIVDDLIATGGTLCAAAKLIERVGAKVVECACVIELPELKGRDKLGDMPVFVLVQADESV.

It belongs to the purine/pyrimidine phosphoribosyltransferase family. In terms of assembly, homodimer.

It is found in the cytoplasm. The enzyme catalyses AMP + diphosphate = 5-phospho-alpha-D-ribose 1-diphosphate + adenine. It functions in the pathway purine metabolism; AMP biosynthesis via salvage pathway; AMP from adenine: step 1/1. Functionally, catalyzes a salvage reaction resulting in the formation of AMP, that is energically less costly than de novo synthesis. This chain is Adenine phosphoribosyltransferase 1 (APT1), found in Triticum aestivum (Wheat).